Reading from the N-terminus, the 216-residue chain is Guanylate kinase (216 aa).

The 179-residue stretch at 11 to 189 (GVLIVISGPS…AVKKIEAILL (179 aa)) folds into the Guanylate kinase-like domain. 18 to 25 (GPSGAGKG) contributes to the ATP binding site.

This sequence belongs to the guanylate kinase family.

Its subcellular location is the cytoplasm. It catalyses the reaction GMP + ATP = GDP + ADP. Its function is as follows. Essential for recycling GMP and indirectly, cGMP. This chain is Guanylate kinase (gmk), found in Clostridium perfringens (strain 13 / Type A).